The following is a 164-amino-acid chain: Probable Brix domain-containing ribosomal biogenesis protein (164 aa).

Positions 1 to 164 (MIITTSRKPS…IKTVKILDIE (164 aa)) constitute a Brix domain.

Its function is as follows. Probably involved in the biogenesis of the ribosome. The sequence is that of Probable Brix domain-containing ribosomal biogenesis protein from Methanococcus maripaludis (strain DSM 14266 / JCM 13030 / NBRC 101832 / S2 / LL).